A 158-amino-acid chain; its full sequence is 2-C-methyl-D-erythritol 2,4-cyclodiphosphate synthase (158 aa).

A divalent metal cation is bound by residues aspartate 8 and histidine 10. Residues 8–10 (DVH) and 34–35 (HS) contribute to the 4-CDP-2-C-methyl-D-erythritol 2-phosphate site. Histidine 42 serves as a coordination point for a divalent metal cation. 4-CDP-2-C-methyl-D-erythritol 2-phosphate is bound by residues 56–58 (DIG), 61–65 (FPDTD), 100–106 (AQKPKML), 132–135 (TTEE), phenylalanine 139, and lysine 142.

It belongs to the IspF family. Homotrimer. Requires a divalent metal cation as cofactor.

The catalysed reaction is 4-CDP-2-C-methyl-D-erythritol 2-phosphate = 2-C-methyl-D-erythritol 2,4-cyclic diphosphate + CMP. Its pathway is isoprenoid biosynthesis; isopentenyl diphosphate biosynthesis via DXP pathway; isopentenyl diphosphate from 1-deoxy-D-xylulose 5-phosphate: step 4/6. Involved in the biosynthesis of isopentenyl diphosphate (IPP) and dimethylallyl diphosphate (DMAPP), two major building blocks of isoprenoid compounds. Catalyzes the conversion of 4-diphosphocytidyl-2-C-methyl-D-erythritol 2-phosphate (CDP-ME2P) to 2-C-methyl-D-erythritol 2,4-cyclodiphosphate (ME-CPP) with a corresponding release of cytidine 5-monophosphate (CMP). In Clostridium tetani (strain Massachusetts / E88), this protein is 2-C-methyl-D-erythritol 2,4-cyclodiphosphate synthase.